We begin with the raw amino-acid sequence, 398 residues long: Probable peptidoglycan glycosyltransferase FtsW (398 aa).

The Cytoplasmic segment spans residues M1–Q25. Residues L26 to V46 traverse the membrane as a helical segment. Topologically, residues T47–G69 are periplasmic. Residues I70–W90 traverse the membrane as a helical segment. Position 91 (K91) is a topological domain, cytoplasmic. A helical membrane pass occupies residues K92–G112. Residues R113 to R120 lie on the Periplasmic side of the membrane. Residues W121–S141 form a helical membrane-spanning segment. Over Y142 to E156 the chain is Cytoplasmic. The helical transmembrane segment at N157–M177 threads the bilayer. Over Q178 to P179 the chain is Periplasmic. Residues D180–A200 traverse the membrane as a helical segment. Residue K201 is a topological domain, cytoplasmic. Residues L202–L222 traverse the membrane as a helical segment. Residues E223–E289 lie on the Periplasmic side of the membrane. Residues L290–I312 form a helical membrane-spanning segment. Topologically, residues G313 to E324 are cytoplasmic. The helical transmembrane segment at G325–A345 threads the bilayer. Residues S346–T356 lie on the Periplasmic side of the membrane. The helical transmembrane segment at L357–L377 threads the bilayer. Residues L378–R398 are Cytoplasmic-facing.

Belongs to the SEDS family. FtsW subfamily.

It localises to the cell inner membrane. The enzyme catalyses [GlcNAc-(1-&gt;4)-Mur2Ac(oyl-L-Ala-gamma-D-Glu-L-Lys-D-Ala-D-Ala)](n)-di-trans,octa-cis-undecaprenyl diphosphate + beta-D-GlcNAc-(1-&gt;4)-Mur2Ac(oyl-L-Ala-gamma-D-Glu-L-Lys-D-Ala-D-Ala)-di-trans,octa-cis-undecaprenyl diphosphate = [GlcNAc-(1-&gt;4)-Mur2Ac(oyl-L-Ala-gamma-D-Glu-L-Lys-D-Ala-D-Ala)](n+1)-di-trans,octa-cis-undecaprenyl diphosphate + di-trans,octa-cis-undecaprenyl diphosphate + H(+). It participates in cell wall biogenesis; peptidoglycan biosynthesis. In terms of biological role, peptidoglycan polymerase that is essential for cell division. This is Probable peptidoglycan glycosyltransferase FtsW from Pseudoalteromonas translucida (strain TAC 125).